The chain runs to 340 residues: Glyceraldehyde-3-phosphate dehydrogenase (340 aa).

NAD(+) is bound by residues Thr-13–Ile-14 and Gly-112. Residue Ser-141 to Asn-143 participates in D-glyceraldehyde 3-phosphate binding. The active-site Nucleophile is the Cys-142. Arg-170 contacts NAD(+). His-196–Gly-197 serves as a coordination point for D-glyceraldehyde 3-phosphate. Gln-302 contributes to the NAD(+) binding site.

The protein belongs to the glyceraldehyde-3-phosphate dehydrogenase family. In terms of assembly, homotetramer.

The protein resides in the cytoplasm. The catalysed reaction is D-glyceraldehyde 3-phosphate + phosphate + NADP(+) = (2R)-3-phospho-glyceroyl phosphate + NADPH + H(+). It carries out the reaction D-glyceraldehyde 3-phosphate + phosphate + NAD(+) = (2R)-3-phospho-glyceroyl phosphate + NADH + H(+). The protein operates within carbohydrate degradation; glycolysis; pyruvate from D-glyceraldehyde 3-phosphate: step 1/5. This Archaeoglobus fulgidus (strain ATCC 49558 / DSM 4304 / JCM 9628 / NBRC 100126 / VC-16) protein is Glyceraldehyde-3-phosphate dehydrogenase (gap).